Consider the following 316-residue polypeptide: PAK4-inhibitor inka2 (316 aa).

Disordered stretches follow at residues 43 to 74 (RSSPPPSPDIEKPCVVPPRRAPRRDNRISHRT) and 108 to 130 (YSEVSGGSLRGEEDDIVEEESET). Over residues 65-74 (RRDNRISHRT) the composition is skewed to basic and acidic residues. Positions 119-129 (EEDDIVEEESE) are enriched in acidic residues. Residues 182 to 219 (DSQDWTGCLLSQSRSRQPLVLGDNSFADLVKQWMDLPE) are inka box.

Belongs to the INKA family.

Its subcellular location is the nucleus. Its function is as follows. Inhibitor of the serine/threonine-protein kinase pak4/pak5. Acts by binding pak4/pak5 in a substrate-like manner, inhibiting the protein kinase activity. This chain is PAK4-inhibitor inka2, found in Xenopus laevis (African clawed frog).